A 325-amino-acid chain; its full sequence is RNA ligase 1 (325 aa).

Requires Mg(2+) as cofactor. The cofactor is Mn(2+). AMPylates itself (auto-AMPylation).

The catalysed reaction is ATP + (ribonucleotide)n-3'-hydroxyl + 5'-phospho-(ribonucleotide)m = (ribonucleotide)n+m + AMP + diphosphate.. Functions as an RNA ligase, in vitro. The ligation reaction entails three nucleotidyl transfer steps. In the first step, the RNA ligase reacts with ATP in the absence of nucleic acid to form a covalent ligase-AMP intermediate and release pyrophosphate. In step 2, the ligase-AMP binds to the nucleic acid and transfers the adenylate to the 5'-PO4 terminus to form an adenylylated intermediate. In step 3, the RNA ligase directs the attack of the 3'-OH on the 5'-phosphoanhydride linkage, resulting in a repaired 3'-5' phosphodiester and release of AMP. Exhibits selectivity for single-stranded RNA substrates and may not have nick-sealing activity on double-stranded DNA-RNA hybrids. May play a role in maintaining RNA integrity under stress conditions, for example in response to reactive oxygen species (ROS). This Pongo abelii (Sumatran orangutan) protein is RNA ligase 1.